The sequence spans 177 residues: Large ribosomal subunit protein uL6 (177 aa).

The protein belongs to the universal ribosomal protein uL6 family. In terms of assembly, part of the 50S ribosomal subunit.

Its function is as follows. This protein binds to the 23S rRNA, and is important in its secondary structure. It is located near the subunit interface in the base of the L7/L12 stalk, and near the tRNA binding site of the peptidyltransferase center. The polypeptide is Large ribosomal subunit protein uL6 (Pseudomonas fluorescens (strain SBW25)).